Reading from the N-terminus, the 529-residue chain is L-ornithine N(5)-monooxygenase (529 aa).

FAD is bound by residues 100–108 and Gln119; that span reads EKQPQFAWH. A substrate-binding site is contributed by Lys124. Val185 is a binding site for FAD. 270–273 is an NADP(+) binding site; that stretch reads NGQS. Substrate contacts are provided by residues 309-312 and Asn339; that span reads NEIF. 339 to 341 is a binding site for NADP(+); that stretch reads NYG. Residue 493–495 participates in FAD binding; that stretch reads TLL. Residue Ser496 coordinates substrate.

This sequence belongs to the lysine N(6)-hydroxylase/L-ornithine N(5)-oxygenase family. Homotetramer. The cofactor is FAD.

The enzyme catalyses L-ornithine + NADPH + O2 = N(5)-hydroxy-L-ornithine + NADP(+) + H2O. The catalysed reaction is L-ornithine + NADH + O2 = N(5)-hydroxy-L-ornithine + NAD(+) + H2O. It participates in siderophore biosynthesis. L-ornithine N(5)-monooxygenase; part of the gene cluster that mediates the biosynthesis of hydroxamate-containing siderophores that play a critical role in virulence. Cochliobolus heterostrophus produces extracellular coprogen-type siderophores including coprogen, neocoprogen I and neocoprogen II, as well as the intracellular siderophore ferricrocin. The role of extracellular siderophores is to supply iron to their producers in planta and the intracellular ferricrocin is required for intracellular iron distribution and storage with a crucial role in ascus and ascospore development. SIDA2 catalyzes the conversion of L-ornithine to N(5)-hydroxyornithine, the first step in the biosynthesis of all hydroxamate-containing siderophores. The assembly of extracellular coprogen-type siderophores is then performed by the nonribosomal peptide synthetase (NRPS) NPS6 whereas the intracellular siderophore ferricrocin is assembled by NPS2. This is L-ornithine N(5)-monooxygenase from Cochliobolus heterostrophus (strain C4 / ATCC 48331 / race T) (Southern corn leaf blight fungus).